Reading from the N-terminus, the 211-residue chain is Ferritin heavy chain (211 aa).

An N-terminal signal peptide occupies residues 1 to 20; the sequence is MNSILLVFAGILAVCLPASA. A Ferritin-like diiron domain is found at 35-191; the sequence is ITMHRSCRNS…GKASTLKKLM (157 aa). Cysteine 41 and cysteine 150 form a disulfide bridge. Glutamate 52, glutamate 87, histidine 90, glutamate 136, and glutamine 173 together coordinate Fe cation.

It belongs to the ferritin family. In terms of assembly, oligomer of 12 light (L) chains and 12 heavy (H) chains; L and H chains are disulfide-linked. The functional molecule forms a roughly spherical shell with a diameter of 12 nm and contains a central cavity into which the insoluble ferric iron core is deposited.

The protein localises to the golgi apparatus. It is found in the secreted. The enzyme catalyses 4 Fe(2+) + O2 + 4 H(+) = 4 Fe(3+) + 2 H2O. Its function is as follows. Stores iron in a soluble, non-toxic, readily available form. Important for iron homeostasis. Iron is taken up in the ferrous form and deposited as ferric hydroxides after oxidation. Ferritin is composed of a heavy (H) chain which is responsible for the oxidation and uptake of ferrous iron, and a light (L) chain which facilitates the nucleation of the ferrihydrite iron core. The polypeptide is Ferritin heavy chain (Trichoplusia ni (Cabbage looper)).